A 62-amino-acid polypeptide reads, in one-letter code: Phylloseptin-Az7 (62 aa).

Residues L1 to C19 form the signal peptide. A propeptide spanning residues E20–E40 is cleaved from the precursor. F61 bears the Phenylalanine amide mark.

It belongs to the frog skin active peptide (FSAP) family. Phylloseptin subfamily. In terms of tissue distribution, expressed by the skin glands.

Its subcellular location is the secreted. Has antimicrobial activity. The sequence is that of Phylloseptin-Az7 (psn15) from Pithecopus azureus (Orange-legged monkey tree frog).